A 65-amino-acid chain; its full sequence is Large ribosomal subunit protein bL35 (65 aa).

It belongs to the bacterial ribosomal protein bL35 family.

In Synechococcus sp. (strain CC9311), this protein is Large ribosomal subunit protein bL35.